Consider the following 399-residue polypeptide: MDFSNTYRNYGEVVDFPEDFLSDYVPTVKSEPEPAAIAPSVCEPPISTTRNYGTDFGRASSMCGSSSSSSSSSYSSGSSPNYLTENGGDTEEPRFEELVSRKMSFDSENVAQVSNQMDYARDTYADSRIPFASIDSNDALLPYPVNNYVAALPVPVPAKKSRGRTAPRTPKSLETSKPGRGVKRPASKEIDAKDLGIGDLSAHMNRQIGDDEELDTQLIAHRILDELKEQCIPQASLAVKVLGRSQGTLSDLLRKPKPWGIMKNGRGTFQRMANWLDLDPVVRRALCFMKKEDVARITGMAEPTPAKRARQTTPSDERIRRFTFTQTQLDSLHTVFQQQDRPNREMQQALSATLKLNRSTVGNFFMNARRRLPKAAPVSQNLVAEHAIDHNQPGPSHHY.

Disordered stretches follow at residues 32–91 (PEPA…GDTE) and 158–187 (AKKSRGRTAPRTPKSLETSKPGRGVKRPAS). Over residues 60–79 (SSMCGSSSSSSSSSYSSGSS) the composition is skewed to low complexity. Residues 205–291 (NRQIGDDEEL…VRRALCFMKK (87 aa)) constitute a DNA-binding region (CUT). The homeobox DNA-binding region spans 315-374 (SDERIRRFTFTQTQLDSLHTVFQQQDRPNREMQQALSATLKLNRSTVGNFFMNARRRLPK).

This sequence belongs to the CUT homeobox family. In terms of tissue distribution, expressed in hermaphrodite gonads.

The protein localises to the nucleus. Its subcellular location is the chromosome. Its function is as follows. Transcriptional regulator which is involved in the sex determination and X chromosome dosage compensation pathways. Directly binds to 5'-ATTGAT-3' sites in the promoter of sex-determining factor xol-1 to negatively regulate its expression and promote hermaphrodite development. Associates with condensed DNA during mitosis. In Caenorhabditis elegans, this protein is Homeobox protein ceh-39.